The primary structure comprises 344 residues: Trace amine-associated receptor 8b (344 aa).

Topologically, residues 1 to 33 (MTSNFSQATLQLCYENVNASCIKTPYSPGLRVL) are extracellular. Asn-4 and Asn-18 each carry an N-linked (GlcNAc...) asparagine glycan. Cystine bridges form between Cys-21/Cys-185 and Cys-104/Cys-189. Residues 34-54 (LYMVFGFGAVLAVCGNLLVVI) form a helical membrane-spanning segment. At 55-67 (SVLHFKQLHSPAN) the chain is on the cytoplasmic side. Residues 68–88 (FLIASLASADFLVGISVMPFS) traverse the membrane as a helical segment. Residues 89–102 (MVRSIESCWYFGDT) are Extracellular-facing. Residues 103–127 (FCSLHSCCDAAFCYSSLFHLCFISV) form a helical membrane-spanning segment. The Cytoplasmic portion of the chain corresponds to 128–146 (DRYIAVTEPLVYPTKFTMS). Residues 147–167 (VSGICISISWILPLVYSSAVF) form a helical membrane-spanning segment. Residues 168-196 (YTGISATGIENLVSALNCVGGCQVAINQD) lie on the Extracellular side of the membrane. A helical transmembrane segment spans residues 197–217 (WVLISFLLFFIPTLVMIILYS). Over 218–256 (KIFLVAKQQAVKIETSISGSKGESSLESHKARVAKRERK) the chain is Cytoplasmic. Residues 257-277 (AAKTLGVTVMAFMVSWLPYTI) form a helical membrane-spanning segment. Residues 278–295 (DTLIDAFMGFITPAYVYE) are Extracellular-facing. A helical transmembrane segment spans residues 296–319 (ICGWIAYYNSAMNPLIYAFFYPWF). Residues 320 to 344 (RKAIKLILSGKILKGHSSTTSLFSE) lie on the Cytoplasmic side of the membrane.

The protein belongs to the G-protein coupled receptor 1 family.

The protein localises to the cell membrane. Olfactory receptor activated by trace amines. Trace amine compounds are enriched in animal body fluids and act on trace amine-associated receptors (TAARs) to elicit both intraspecific and interspecific innate behaviors. Ligand-binding causes a conformation change that triggers signaling via G(s)-class of G alpha proteins (GNAL or GNAS). This is Trace amine-associated receptor 8b from Rattus norvegicus (Rat).